We begin with the raw amino-acid sequence, 181 residues long: Acireductone dioxygenase (181 aa).

Fe(2+)-binding residues include His97, His99, Glu103, and His141. Ni(2+) contacts are provided by His97, His99, Glu103, and His141.

This sequence belongs to the acireductone dioxygenase (ARD) family. As to quaternary structure, monomer. Requires Fe(2+) as cofactor. Ni(2+) serves as cofactor.

It carries out the reaction 1,2-dihydroxy-5-(methylsulfanyl)pent-1-en-3-one + O2 = 3-(methylsulfanyl)propanoate + CO + formate + 2 H(+). The enzyme catalyses 1,2-dihydroxy-5-(methylsulfanyl)pent-1-en-3-one + O2 = 4-methylsulfanyl-2-oxobutanoate + formate + 2 H(+). Its pathway is amino-acid biosynthesis; L-methionine biosynthesis via salvage pathway; L-methionine from S-methyl-5-thio-alpha-D-ribose 1-phosphate: step 5/6. Catalyzes 2 different reactions between oxygen and the acireductone 1,2-dihydroxy-3-keto-5-methylthiopentene (DHK-MTPene) depending upon the metal bound in the active site. Fe-containing acireductone dioxygenase (Fe-ARD) produces formate and 2-keto-4-methylthiobutyrate (KMTB), the alpha-ketoacid precursor of methionine in the methionine recycle pathway. Ni-containing acireductone dioxygenase (Ni-ARD) produces methylthiopropionate, carbon monoxide and formate, and does not lie on the methionine recycle pathway. The polypeptide is Acireductone dioxygenase (Pseudomonas syringae pv. tomato (strain ATCC BAA-871 / DC3000)).